A 244-amino-acid chain; its full sequence is Heat shock transcription factor (244 aa).

The DNA-binding element occupies 13–108; the sequence is IPKFIMKLYK…LLGFDDSLRM (96 aa). The tract at residues 123 to 168 is involved in trimerization; that stretch reads DGSLKEIVEYLYVQNQELYTELSVCKERIERQERALNGLIEILSRV. Residues 204–244 are disordered; it reads EGCEPASPPLQDKGIPELSFKPGGIPHADSDTKDDNYDPFF. Over residues 231-244 the composition is skewed to basic and acidic residues; sequence ADSDTKDDNYDPFF.

The protein belongs to the HSF family. In terms of assembly, homotrimer. Homotrimerization increases the affinity of HSF1 to DNA.

The protein localises to the nucleus. Its function is as follows. DNA-binding transcription factor that specifically binds heat shock promoter elements (HSE) and activates transcription. In Encephalitozoon cuniculi (strain GB-M1) (Microsporidian parasite), this protein is Heat shock transcription factor.